Reading from the N-terminus, the 461-residue chain is Asparagine--tRNA ligase (461 aa).

It belongs to the class-II aminoacyl-tRNA synthetase family. As to quaternary structure, homodimer.

It localises to the cytoplasm. The enzyme catalyses tRNA(Asn) + L-asparagine + ATP = L-asparaginyl-tRNA(Asn) + AMP + diphosphate + H(+). This is Asparagine--tRNA ligase from Geotalea uraniireducens (strain Rf4) (Geobacter uraniireducens).